The primary structure comprises 266 residues: MVSTKTYTTRASTHPSPVAQRLFHLMDTKKANLCASVDVQTTSEFLSLIDKLGPYICLVKTHIDIIDDFSYEGTIVPLLELARKHNFMIFEDRKFADIGNTVKHQYTSGVYKISSWSDITNAHGVTGAGVVDGLKQGALETTKEPRGLLMLAELSSKGSLAYGEYTEKTVEIAKLDKEFVIGFIAQRDMGGHDEGFDWIVMTPGVGLDDKGDGLGQQYRTVDEVVSTGTDVIIVGRGLFGKGRDPEVEGKRYRDAGWNAYLKRTGQ.

Substrate contacts are provided by residues Asp38, 60–62 (KTH), 92–101 (DRKFADIGNT), Tyr218, and Arg236. Lys94 functions as the Proton donor in the catalytic mechanism.

It belongs to the OMP decarboxylase family.

The enzyme catalyses orotidine 5'-phosphate + H(+) = UMP + CO2. It participates in pyrimidine metabolism; UMP biosynthesis via de novo pathway; UMP from orotate: step 2/2. This is Orotidine 5'-phosphate decarboxylase (URA3) from Candida maltosa (Yeast).